Here is a 383-residue protein sequence, read N- to C-terminus: Acetylornithine deacetylase (383 aa).

Histidine 80 contacts Zn(2+). Residue aspartate 82 is part of the active site. Aspartate 112 lines the Zn(2+) pocket. Residue glutamate 144 is part of the active site. Residues glutamate 145, glutamate 169, and histidine 355 each coordinate Zn(2+).

Belongs to the peptidase M20A family. ArgE subfamily. As to quaternary structure, homodimer. Zn(2+) is required as a cofactor. Co(2+) serves as cofactor. Requires glutathione as cofactor.

It is found in the cytoplasm. It catalyses the reaction N(2)-acetyl-L-ornithine + H2O = L-ornithine + acetate. The protein operates within amino-acid biosynthesis; L-arginine biosynthesis; L-ornithine from N(2)-acetyl-L-ornithine (linear): step 1/1. Catalyzes the hydrolysis of the amide bond of N(2)-acetylated L-amino acids. Cleaves the acetyl group from N-acetyl-L-ornithine to form L-ornithine, an intermediate in L-arginine biosynthesis pathway, and a branchpoint in the synthesis of polyamines. This chain is Acetylornithine deacetylase, found in Pectobacterium carotovorum subsp. carotovorum (strain PC1).